Consider the following 249-residue polypeptide: Aspartate/glutamate leucyltransferase (249 aa).

This sequence belongs to the R-transferase family. Bpt subfamily.

The protein resides in the cytoplasm. It carries out the reaction N-terminal L-glutamyl-[protein] + L-leucyl-tRNA(Leu) = N-terminal L-leucyl-L-glutamyl-[protein] + tRNA(Leu) + H(+). The enzyme catalyses N-terminal L-aspartyl-[protein] + L-leucyl-tRNA(Leu) = N-terminal L-leucyl-L-aspartyl-[protein] + tRNA(Leu) + H(+). In terms of biological role, functions in the N-end rule pathway of protein degradation where it conjugates Leu from its aminoacyl-tRNA to the N-termini of proteins containing an N-terminal aspartate or glutamate. In Brucella abortus (strain 2308), this protein is Aspartate/glutamate leucyltransferase.